We begin with the raw amino-acid sequence, 545 residues long: Chaperonin GroEL 3 (545 aa).

ATP-binding positions include 30 to 33 (TLGP), lysine 51, 87 to 91 (DGTTT), glycine 415, and aspartate 496.

The protein belongs to the chaperonin (HSP60) family. In terms of assembly, forms a cylinder of 14 subunits composed of two heptameric rings stacked back-to-back. Interacts with the co-chaperonin GroES.

It localises to the cytoplasm. It catalyses the reaction ATP + H2O + a folded polypeptide = ADP + phosphate + an unfolded polypeptide.. In terms of biological role, together with its co-chaperonin GroES, plays an essential role in assisting protein folding. The GroEL-GroES system forms a nano-cage that allows encapsulation of the non-native substrate proteins and provides a physical environment optimized to promote and accelerate protein folding. The chain is Chaperonin GroEL 3 from Nitrobacter hamburgensis (strain DSM 10229 / NCIMB 13809 / X14).